Consider the following 283-residue polypeptide: Protein/nucleic acid deglycase HchA (283 aa).

Zn(2+) contacts are provided by H86, E91, and H123. C185 functions as the Nucleophile in the catalytic mechanism.

Belongs to the peptidase C56 family. HchA subfamily. As to quaternary structure, homodimer.

The protein resides in the cytoplasm. It carries out the reaction N(omega)-(1-hydroxy-2-oxopropyl)-L-arginyl-[protein] + H2O = lactate + L-arginyl-[protein] + H(+). The enzyme catalyses N(6)-(1-hydroxy-2-oxopropyl)-L-lysyl-[protein] + H2O = lactate + L-lysyl-[protein] + H(+). It catalyses the reaction S-(1-hydroxy-2-oxopropyl)-L-cysteinyl-[protein] + H2O = lactate + L-cysteinyl-[protein] + H(+). The catalysed reaction is N(omega)-(1-hydroxy-2-oxoethyl)-L-arginyl-[protein] + H2O = L-arginyl-[protein] + glycolate + H(+). It carries out the reaction N(6)-(1-hydroxy-2-oxoethyl)-L-lysyl-[protein] + H2O = glycolate + L-lysyl-[protein] + H(+). The enzyme catalyses S-(1-hydroxy-2-oxoethyl)-L-cysteinyl-[protein] + H2O = glycolate + L-cysteinyl-[protein] + H(+). It catalyses the reaction N(2)-(1-hydroxy-2-oxopropyl)-dGTP + H2O = lactate + dGTP + H(+). The catalysed reaction is N(2)-(1-hydroxy-2-oxopropyl)-GTP + H2O = lactate + GTP + H(+). It carries out the reaction N(2)-(1-hydroxy-2-oxopropyl)-GDP + H2O = lactate + GDP + H(+). The enzyme catalyses N(2)-(1-hydroxy-2-oxopropyl)-GMP + H2O = lactate + GMP + H(+). It catalyses the reaction N(2)-(1-hydroxy-2-oxoethyl)-dGTP + H2O = dGTP + glycolate + H(+). The catalysed reaction is N(2)-(1-hydroxy-2-oxoethyl)-GTP + H2O = glycolate + GTP + H(+). It carries out the reaction N(2)-(1-hydroxy-2-oxoethyl)-GDP + H2O = glycolate + GDP + H(+). The enzyme catalyses N(2)-(1-hydroxy-2-oxoethyl)-GMP + H2O = glycolate + GMP + H(+). It catalyses the reaction an N(2)-(1-hydroxy-2-oxopropyl)-guanosine in RNA + H2O = a guanosine in RNA + lactate + H(+). The catalysed reaction is an N(2)-(1-hydroxy-2-oxopropyl)-2'-deoxyguanosine in DNA + H2O = a 2'-deoxyguanosine in DNA + lactate + H(+). It carries out the reaction an N(2)-(1-hydroxy-2-oxoethyl)-guanosine in RNA + H2O = a guanosine in RNA + glycolate + H(+). The enzyme catalyses an N(2)-(1-hydroxy-2-oxoethyl)-2'-deoxyguanosine in DNA + H2O = a 2'-deoxyguanosine in DNA + glycolate + H(+). Protein and nucleotide deglycase that catalyzes the deglycation of the Maillard adducts formed between amino groups of proteins or nucleotides and reactive carbonyl groups of glyoxals. Thus, functions as a protein deglycase that repairs methylglyoxal- and glyoxal-glycated proteins, and releases repaired proteins and lactate or glycolate, respectively. Deglycates cysteine, arginine and lysine residues in proteins, and thus reactivates these proteins by reversing glycation by glyoxals. Acts on early glycation intermediates (hemithioacetals and aminocarbinols), preventing the formation of Schiff bases and advanced glycation endproducts (AGE). Also functions as a nucleotide deglycase able to repair glycated guanine in the free nucleotide pool (GTP, GDP, GMP, dGTP) and in DNA and RNA. Is thus involved in a major nucleotide repair system named guanine glycation repair (GG repair), dedicated to reversing methylglyoxal and glyoxal damage via nucleotide sanitization and direct nucleic acid repair. Plays an important role in protecting cells from carbonyl stress. The sequence is that of Protein/nucleic acid deglycase HchA from Escherichia coli (strain 55989 / EAEC).